We begin with the raw amino-acid sequence, 199 residues long: NAD(P)H dehydrogenase (quinone) (199 aa).

A Flavodoxin-like domain is found at V4–I190. Residues S10–I15 and T78–F80 contribute to the FMN site. Y12 lines the NAD(+) pocket. Position 98 (W98) interacts with substrate. FMN contacts are provided by residues S113–G119 and H134.

This sequence belongs to the WrbA family. It depends on FMN as a cofactor.

The enzyme catalyses a quinone + NADH + H(+) = a quinol + NAD(+). It carries out the reaction a quinone + NADPH + H(+) = a quinol + NADP(+). In Bradyrhizobium sp. (strain BTAi1 / ATCC BAA-1182), this protein is NAD(P)H dehydrogenase (quinone).